The following is a 102-amino-acid chain: Small ribosomal subunit protein uS10 (102 aa).

Belongs to the universal ribosomal protein uS10 family. As to quaternary structure, part of the 30S ribosomal subunit.

Functionally, involved in the binding of tRNA to the ribosomes. In Methylobacillus flagellatus (strain ATCC 51484 / DSM 6875 / VKM B-1610 / KT), this protein is Small ribosomal subunit protein uS10.